Consider the following 291-residue polypeptide: Nucleotide-binding protein LJ_0866 (291 aa).

Gly-13 to Thr-20 is a binding site for ATP. Residue Asp-63–Val-66 participates in GTP binding.

It belongs to the RapZ-like family.

Its function is as follows. Displays ATPase and GTPase activities. The chain is Nucleotide-binding protein LJ_0866 from Lactobacillus johnsonii (strain CNCM I-12250 / La1 / NCC 533).